The following is a 1323-amino-acid chain: RNA replication protein (1323 aa).

The region spanning N60–L224 is the Alphavirus-like MT domain. Positions E432–D486 are disordered. The (+)RNA virus helicase ATP-binding domain maps to I572–V733. G605–S612 contributes to the ATP binding site. The (+)RNA virus helicase C-terminal domain occupies N734–A867. Residues G1104–F1211 form the RdRp catalytic domain.

It belongs to the potexvirus/carlavirus RNA replication protein family.

The catalysed reaction is RNA(n) + a ribonucleoside 5'-triphosphate = RNA(n+1) + diphosphate. The enzyme catalyses ATP + H2O = ADP + phosphate + H(+). Functionally, RNA replication. The central part of this protein possibly functions as an ATP-binding helicase. This is RNA replication protein from Strawberry mild yellow edge-associated virus (SMYEaV).